Here is a 436-residue protein sequence, read N- to C-terminus: Envelope glycoprotein (436 aa).

A signal peptide is located at residue methionine 1. The Extracellular portion of the chain corresponds to 2–436 (ANPSPHQIYN…GGLTVGGIAA (435 aa)). Asparagine 11 and asparagine 26 each carry an N-linked (GlcNAc...) asparagine; by host glycan. Intrachain disulfides connect cysteine 95–cysteine 117 and cysteine 109–cysteine 122. Residues 203 to 255 (PPQAMGPNLVLPDQKPPSRQSQTGSKVATQRPQTNESAPRSVGPTTMGPKRIG) form a disordered region. Positions 219–240 (PSRQSQTGSKVATQRPQTNESA) are enriched in polar residues. N-linked (GlcNAc...) asparagine; by host glycosylation is found at asparagine 237, asparagine 272, and asparagine 277. The short motif at 282–285 (CWLC) is the CXXC element. Asparagine 304, asparagine 344, asparagine 360, and asparagine 380 each carry an N-linked (GlcNAc...) asparagine; by host glycan.

In terms of assembly, the mature envelope protein (Env) consists of a trimer of SU-TM heterodimers attached by a labile interchain disulfide bond. Post-translationally, specific enzymatic cleavages in vivo yield mature proteins. Envelope glycoproteins are synthesized as an inactive precursor that is N-glycosylated and processed likely by host cell furin or by a furin-like protease in the Golgi to yield the mature SU and TM proteins. The cleavage site between SU and TM requires the minimal sequence [KR]-X-[KR]-R.

Its subcellular location is the virion membrane. It localises to the host cell membrane. The surface protein (SU) attaches the virus to the host cell by binding to its receptor. This interaction triggers the refolding of the transmembrane protein (TM) and is thought to activate its fusogenic potential by unmasking its fusion peptide. Fusion occurs at the host cell plasma membrane. In terms of biological role, the transmembrane protein (TM) acts as a class I viral fusion protein. Under the current model, the protein has at least 3 conformational states: pre-fusion native state, pre-hairpin intermediate state, and post-fusion hairpin state. During viral and target cell membrane fusion, the coiled coil regions (heptad repeats) assume a trimer-of-hairpins structure, positioning the fusion peptide in close proximity to the C-terminal region of the ectodomain. The formation of this structure appears to drive apposition and subsequent fusion of viral and target cell membranes. Membranes fusion leads to delivery of the nucleocapsid into the cytoplasm. The sequence is that of Envelope glycoprotein from Feline leukemia virus (strain C/FS246).